Here is a 98-residue protein sequence, read N- to C-terminus: Alpha-elicitin capsicein (98 aa).

Disulfide bonds link C3–C71, C27–C56, and C51–C95.

This sequence belongs to the elicitin family.

Its subcellular location is the secreted. In terms of biological role, induces local and distal defense responses (incompatible hypersensitive reaction) in plants from the solanaceae and cruciferae families. Elicits leaf necrosis and causes the accumulation of pathogenesis-related proteins. Might interact with the lipidic molecules of the plasma membrane. This is Alpha-elicitin capsicein from Phytophthora capsici.